Reading from the N-terminus, the 421-residue chain is Serine--tRNA ligase (421 aa).

231–233 (TAE) serves as a coordination point for L-serine. An ATP-binding site is contributed by 262 to 264 (RRE). Glutamate 285 serves as a coordination point for L-serine. 349-352 (EISS) lines the ATP pocket. Serine 384 serves as a coordination point for L-serine.

Belongs to the class-II aminoacyl-tRNA synthetase family. Type-1 seryl-tRNA synthetase subfamily. As to quaternary structure, homodimer. The tRNA molecule binds across the dimer.

It localises to the cytoplasm. It carries out the reaction tRNA(Ser) + L-serine + ATP = L-seryl-tRNA(Ser) + AMP + diphosphate + H(+). The catalysed reaction is tRNA(Sec) + L-serine + ATP = L-seryl-tRNA(Sec) + AMP + diphosphate + H(+). It participates in aminoacyl-tRNA biosynthesis; selenocysteinyl-tRNA(Sec) biosynthesis; L-seryl-tRNA(Sec) from L-serine and tRNA(Sec): step 1/1. Its function is as follows. Catalyzes the attachment of serine to tRNA(Ser). Is also able to aminoacylate tRNA(Sec) with serine, to form the misacylated tRNA L-seryl-tRNA(Sec), which will be further converted into selenocysteinyl-tRNA(Sec). In Hydrogenobaculum sp. (strain Y04AAS1), this protein is Serine--tRNA ligase.